Here is a 158-residue protein sequence, read N- to C-terminus: Crossover junction endodeoxyribonuclease RuvC (158 aa).

Active-site residues include Asp-7, Glu-67, and Asp-140. Residues Asp-7, Glu-67, and Asp-140 each coordinate Mg(2+).

Belongs to the RuvC family. As to quaternary structure, homodimer which binds Holliday junction (HJ) DNA. The HJ becomes 2-fold symmetrical on binding to RuvC with unstacked arms; it has a different conformation from HJ DNA in complex with RuvA. In the full resolvosome a probable DNA-RuvA(4)-RuvB(12)-RuvC(2) complex forms which resolves the HJ. Requires Mg(2+) as cofactor.

The protein localises to the cytoplasm. The catalysed reaction is Endonucleolytic cleavage at a junction such as a reciprocal single-stranded crossover between two homologous DNA duplexes (Holliday junction).. In terms of biological role, the RuvA-RuvB-RuvC complex processes Holliday junction (HJ) DNA during genetic recombination and DNA repair. Endonuclease that resolves HJ intermediates. Cleaves cruciform DNA by making single-stranded nicks across the HJ at symmetrical positions within the homologous arms, yielding a 5'-phosphate and a 3'-hydroxyl group; requires a central core of homology in the junction. The consensus cleavage sequence is 5'-(A/T)TT(C/G)-3'. Cleavage occurs on the 3'-side of the TT dinucleotide at the point of strand exchange. HJ branch migration catalyzed by RuvA-RuvB allows RuvC to scan DNA until it finds its consensus sequence, where it cleaves and resolves the cruciform DNA. The polypeptide is Crossover junction endodeoxyribonuclease RuvC (Dictyoglomus turgidum (strain DSM 6724 / Z-1310)).